The primary structure comprises 591 residues: V-type ATP synthase alpha chain (591 aa).

An ATP-binding site is contributed by 233-240; it reads GPFGAGKT.

It belongs to the ATPase alpha/beta chains family.

It carries out the reaction ATP + H2O + 4 H(+)(in) = ADP + phosphate + 5 H(+)(out). Its function is as follows. Produces ATP from ADP in the presence of a proton gradient across the membrane. The V-type alpha chain is a catalytic subunit. This Streptococcus pyogenes serotype M1 protein is V-type ATP synthase alpha chain.